The following is an 87-amino-acid chain: UPF0473 protein Dred_0776 (87 aa).

It belongs to the UPF0473 family.

This Desulforamulus reducens (strain ATCC BAA-1160 / DSM 100696 / MI-1) (Desulfotomaculum reducens) protein is UPF0473 protein Dred_0776.